The chain runs to 293 residues: Probable endonuclease 4 (293 aa).

His78, His118, Glu154, Asp188, His191, His225, Asp238, His240, and Glu270 together coordinate Zn(2+).

Belongs to the AP endonuclease 2 family. Zn(2+) is required as a cofactor.

It catalyses the reaction Endonucleolytic cleavage to 5'-phosphooligonucleotide end-products.. Functionally, endonuclease IV plays a role in DNA repair. It cleaves phosphodiester bonds at apurinic or apyrimidinic (AP) sites, generating a 3'-hydroxyl group and a 5'-terminal sugar phosphate. This chain is Probable endonuclease 4, found in Vibrio vulnificus (strain YJ016).